A 466-amino-acid chain; its full sequence is Cysteine--tRNA ligase (466 aa).

Residue C28 coordinates Zn(2+). A 'HIGH' region motif is present at residues 30–40; it reads PTVYNYIHIGN. Zn(2+) contacts are provided by C208, H233, and E237. Positions 265–269 match the 'KMSKS' region motif; it reads KMSKS. K268 lines the ATP pocket.

It belongs to the class-I aminoacyl-tRNA synthetase family. In terms of assembly, monomer. The cofactor is Zn(2+).

It localises to the cytoplasm. It carries out the reaction tRNA(Cys) + L-cysteine + ATP = L-cysteinyl-tRNA(Cys) + AMP + diphosphate. In Staphylococcus aureus (strain MRSA252), this protein is Cysteine--tRNA ligase.